Consider the following 553-residue polypeptide: Hydroxylamine reductase (553 aa).

[2Fe-2S] cluster contacts are provided by cysteine 3, cysteine 6, cysteine 18, and cysteine 25. Hybrid [4Fe-2O-2S] cluster-binding residues include histidine 252, glutamate 276, cysteine 320, cysteine 408, cysteine 436, cysteine 461, glutamate 495, and lysine 497. Residue cysteine 408 is modified to Cysteine persulfide.

It belongs to the HCP family. [2Fe-2S] cluster serves as cofactor. Requires hybrid [4Fe-2O-2S] cluster as cofactor.

It localises to the cytoplasm. The catalysed reaction is A + NH4(+) + H2O = hydroxylamine + AH2 + H(+). Its function is as follows. Catalyzes the reduction of hydroxylamine to form NH(3) and H(2)O. The polypeptide is Hydroxylamine reductase (Aliivibrio fischeri (strain ATCC 700601 / ES114) (Vibrio fischeri)).